Here is a 336-residue protein sequence, read N- to C-terminus: D-erythrose-4-phosphate dehydrogenase (336 aa).

Position 11-12 (11-12) interacts with NAD(+); the sequence is RI. Substrate contacts are provided by residues 153–155, Arg-199, 212–213, and Arg-235; these read SCT and TK. Cys-154 serves as the catalytic Nucleophile. Asn-317 is an NAD(+) binding site.

This sequence belongs to the glyceraldehyde-3-phosphate dehydrogenase family. Epd subfamily. In terms of assembly, homotetramer.

The protein resides in the cytoplasm. The catalysed reaction is D-erythrose 4-phosphate + NAD(+) + H2O = 4-phospho-D-erythronate + NADH + 2 H(+). The protein operates within cofactor biosynthesis; pyridoxine 5'-phosphate biosynthesis; pyridoxine 5'-phosphate from D-erythrose 4-phosphate: step 1/5. Functionally, catalyzes the NAD-dependent conversion of D-erythrose 4-phosphate to 4-phosphoerythronate. In Aeromonas salmonicida (strain A449), this protein is D-erythrose-4-phosphate dehydrogenase.